The sequence spans 311 residues: Malate dehydrogenase (311 aa).

NAD(+) contacts are provided by residues 7–13 (GAAGGIG) and aspartate 34. Substrate contacts are provided by arginine 81 and arginine 87. NAD(+) is bound by residues asparagine 94 and 117 to 119 (ITN). Residues asparagine 119 and arginine 153 each contribute to the substrate site. Residue histidine 177 is the Proton acceptor of the active site. Methionine 227 is a binding site for NAD(+).

Belongs to the LDH/MDH superfamily. MDH type 1 family. In terms of assembly, homodimer.

The catalysed reaction is (S)-malate + NAD(+) = oxaloacetate + NADH + H(+). Functionally, catalyzes the reversible oxidation of malate to oxaloacetate. This Aliivibrio fischeri (strain MJ11) (Vibrio fischeri) protein is Malate dehydrogenase.